The sequence spans 433 residues: GPI mannosyltransferase 2 (433 aa).

The next 9 helical transmembrane spans lie at 4-24, 109-129, 148-165, 172-194, 204-226, 247-267, 322-342, 354-374, and 410-430; these read LVKPVLFFVVVRIVQYAIISL, TAVILENLIYFMAMITLFYLT, ATFTAILFSCNSGSGFFT, LSFLFSFLGILAREFSVTPIIPY, FYYTIVSSFCFTIATLNRSNCIL, ALLFPVLAGCIVALFFVRQQF, IPNFLFGLPTFVILFSSTFYF, LIFITRAFTIIILLFAHVQII, and GYIYWLIFWVPIQTSLFVFFL.

This sequence belongs to the PIGV family.

Its subcellular location is the endoplasmic reticulum membrane. The protein operates within glycolipid biosynthesis; glycosylphosphatidylinositol-anchor biosynthesis. Mannosyltransferase involved in glycosylphosphatidylinositol-anchor biosynthesis. Transfers the second mannose to the glycosylphosphatidylinositol during GPI precursor assembly. The chain is GPI mannosyltransferase 2 (GPI18) from Candida glabrata (strain ATCC 2001 / BCRC 20586 / JCM 3761 / NBRC 0622 / NRRL Y-65 / CBS 138) (Yeast).